The primary structure comprises 137 residues: Oleosin Ara h 11.0101 (137 aa).

Position 2 is an N-acetylalanine; alternate (Ala2). 2 helical membrane passes run 27–47 (AVVA…GTVI) and 55–75 (LFVI…LLGL).

The protein belongs to the oleosin family. In terms of tissue distribution, expressed in seeds (at protein level).

Its subcellular location is the lipid droplet. It localises to the membrane. Its function is as follows. May have a structural role to stabilize the lipid body during desiccation of the seed by preventing coalescence of the oil. Probably interacts with both lipid and phospholipid moieties of lipid bodies. May also provide recognition signals for specific lipase anchorage in lipolysis during seedling growth. This is Oleosin Ara h 11.0101 from Arachis hypogaea (Peanut).